Reading from the N-terminus, the 68-residue chain is MRTSYLLLFTLCLLLSEMASGGNFLTGLGHRSDHYNCVSSGGQCLYSACPIFTKIQGTCYRGKAKCCK.

Positions 1-21 are cleaved as a signal peptide; it reads MRTSYLLLFTLCLLLSEMASG. Residues 22 to 32 constitute a propeptide that is removed on maturation; sequence GNFLTGLGHRS. 3 disulfides stabilise this stretch: cysteine 37–cysteine 66, cysteine 44–cysteine 59, and cysteine 49–cysteine 67.

Belongs to the beta-defensin family. Monomer. Homodimer.

It localises to the secreted. It is found in the membrane. Has bactericidal activity. May act as a ligand for C-C chemokine receptor CCR6. Positively regulates the sperm motility and bactericidal activity in a CCR6-dependent manner. Binds to CCR6 and triggers Ca2+ mobilization in the sperm which is important for its motility. The sequence is that of Beta-defensin 1 (DEFB1) from Pongo pygmaeus (Bornean orangutan).